Consider the following 516-residue polypeptide: Probable serine/threonine-protein kinase DDB_G0293276 (516 aa).

Positions 69 to 115 (SIEIDDENPYNTNNNNNSNNNNNNNNNNCNNSNNSNNNKNINSLDNI) are disordered. Low complexity predominate over residues 79-115 (NTNNNNNSNNNNNNNNNNCNNSNNSNNNKNINSLDNI). Positions 232–479 (YKHVECIGKG…SKDIKNHPYF (248 aa)) constitute a Protein kinase domain. ATP is bound by residues 238–246 (IGKGGYGVV) and lysine 261. Aspartate 350 (proton acceptor) is an active-site residue.

The protein belongs to the protein kinase superfamily. AGC Ser/Thr protein kinase family.

It carries out the reaction L-seryl-[protein] + ATP = O-phospho-L-seryl-[protein] + ADP + H(+). It catalyses the reaction L-threonyl-[protein] + ATP = O-phospho-L-threonyl-[protein] + ADP + H(+). This Dictyostelium discoideum (Social amoeba) protein is Probable serine/threonine-protein kinase DDB_G0293276.